The sequence spans 254 residues: Zinc transporter GufA (254 aa).

Helical transmembrane passes span 4–24, 74–94, 112–132, 143–163, 176–196, 198–218, and 234–254; these read GLVA…PVLV, VAAG…LMPH, ALLF…AVGV, LSVA…VALA, FLAL…VLAL, LSSA…LYVI, and EATT…MSLG. Zn(2+) is bound by residues Asn-123, Glu-126, Gln-152, Asn-153, Glu-156, and Glu-185.

It belongs to the ZIP transporter (TC 2.A.5) family. In terms of assembly, homodimer.

The protein localises to the cell inner membrane. Functionally, mediates the uptake of Zn(2+). This is Zinc transporter GufA (gufA) from Myxococcus xanthus.